The primary structure comprises 276 residues: Integrin-binding sialoprotein (276 aa).

Positions 1–16 are cleaved as a signal peptide; it reads MRSALLLACLLATASA. A disordered region spans residues 54-251; that stretch reads HRYKGSDSSE…EEPARGDSYR (198 aa). Residues 61-75 show a composition bias toward acidic residues; it reads SSEEEGDGSEEEEEG. The span at 106-119 shows a compositional bias: basic and acidic residues; the sequence is QDCKGGQKGTRGDS. Positions 116-118 match the Cell attachment site motif; sequence RGD. The span at 120–144 shows a compositional bias: acidic residues; the sequence is GDEDSDEEEEEEEEEEEEEEVEEQD. Over residues 145–165 the composition is skewed to polar residues; the sequence is VSVNGTSTNTTAETPHGNNTV. N-linked (GlcNAc...) asparagine glycosylation is found at Asn-148, Asn-153, and Asn-162. The segment covering 167 to 188 has biased composition (acidic residues); that stretch reads AEEEEDDDEEEEEEEEEEEEAE. Over residues 189 to 200 the composition is skewed to low complexity; that stretch reads ATTAAATTAQDE. Residues 228-230 carry the Cell attachment site motif; that stretch reads RGD. Residues 246 to 248 carry the Integrin-binding motif motif; sequence RGD. Tyr-272 and Tyr-273 each carry sulfotyrosine.

Monomer. Interacts with integrins; the interaction promotes cell adhesion. In terms of processing, phosphorylated on serine and threonine residues.

The protein resides in the secreted. Functionally, binds tightly to hydroxyapatite. Appears to form an integral part of the mineralized matrix. Probably important to cell-matrix interaction. Promotes adhesion and migration of various cells via the alpha-V/beta-3 integrin receptor (ITGAV:ITGB3). This is Integrin-binding sialoprotein (IBSP) from Gallus gallus (Chicken).